A 772-amino-acid polypeptide reads, in one-letter code: NAD(P)H-quinone oxidoreductase subunit 5, chloroplastic (772 aa).

Transmembrane regions (helical) follow at residues 8–28 (IWIVPVCPFVASMSVGLGLFF), 39–59 (ICAIISIFLLGIAMFISFSIF), 87–107 (FLIDPLTSTMLVSVTSVGILV), 120–140 (GYVRFFAYLSLFTASMLGLVL), 147–167 (IYIFWELVGMCSYLLIGFWFS), 185–205 (GDFGLLLGILGTYWITGSFDI), 219–239 (NGVNLFLANMCALLLFLGPAA), 258–278 (TPISALIHAATMVAAGIFFVA), 291–311 (MNIISWVGGITALLGATIALA), 395–415 (GTTFLLGTLSLCGIPPFACFW), 425–445 (WIASASLGWIAWCTAGLTGFY), 574–594 (LFSLISLAIPTLFIGFIGVPF), 631–651 (IPSVSIALVGVSISFFIYGPV), 710–730 (WIIDGIVNGIGILSFFGGEGM), and 738–758 (IPSYLFGLIIGNILMLIILII).

This sequence belongs to the complex I subunit 5 family. In terms of assembly, NDH is composed of at least 16 different subunits, 5 of which are encoded in the nucleus.

The protein resides in the plastid. The protein localises to the chloroplast thylakoid membrane. It catalyses the reaction a plastoquinone + NADH + (n+1) H(+)(in) = a plastoquinol + NAD(+) + n H(+)(out). The catalysed reaction is a plastoquinone + NADPH + (n+1) H(+)(in) = a plastoquinol + NADP(+) + n H(+)(out). In terms of biological role, NDH shuttles electrons from NAD(P)H:plastoquinone, via FMN and iron-sulfur (Fe-S) centers, to quinones in the photosynthetic chain and possibly in a chloroplast respiratory chain. The immediate electron acceptor for the enzyme in this species is believed to be plastoquinone. Couples the redox reaction to proton translocation, and thus conserves the redox energy in a proton gradient. This chain is NAD(P)H-quinone oxidoreductase subunit 5, chloroplastic (ndhF), found in Angiopteris evecta (Mule's foot fern).